A 234-amino-acid chain; its full sequence is Sugar fermentation stimulation protein homolog (234 aa).

It belongs to the SfsA family.

The protein is Sugar fermentation stimulation protein homolog of Photobacterium profundum (strain SS9).